The following is a 78-amino-acid chain: MSRVCQVTGKKPMVGNNRSHAKNATRRRFLPNLQNHRFWLETEKRFVKLRISTKGMRIIDKKGIEVVVAELRARGEKV.

Residues 1–21 (MSRVCQVTGKKPMVGNNRSHA) are disordered.

The protein belongs to the bacterial ribosomal protein bL28 family.

The sequence is that of Large ribosomal subunit protein bL28 from Shewanella piezotolerans (strain WP3 / JCM 13877).